Here is a 1367-residue protein sequence, read N- to C-terminus: MPSLINFDAISSLKSSLHGLSICAFNHLHHVPQHNGSLAHEGPTNQTDYSSRHHESQFSQEAHAEQRSRDDEEANSFEGSCNNSDQSWTSRVTSKKNEAGTESGDASVRRIYVTSIPEEHRHLPSQWFPSNKIRTTKYTPVSFIPKNLWNQFKNIANAFFLFVTLLQCIPLFCPEHLGLSFIPLSVILLTTAIKDGIEDYRRCVLDKKFNNTLTWKLVGFNNANALGEHIGLWRKLKKFISHTVADMSYCLKNSGISSGLATLTVDNISHRHSLESDSAFTLSSVSQDSLEIHEIGNSGPSNSFSVIQEQSTGSSNAKFERVCRKSLLVGDIVKVLADEAIPADLLILSTENSNGVCYVETKNLDGETNLKDKYALCSTKCCKSEYRCSAASFWVECEQPHADLYSLNGVVKAPGAVQSPSESTNGRKIHEEPFSISNVLLCGCTLRNSKWVIGLVLYTGSETRIQKNRGLTPSKRSRITRDLNWTIILNFLLLFAMCLFSGVLRSIYSAQNNSARVFELSKNSNTAPAHGIISIFTSLILFQNLVPISLYITMDIVRSIQSYFIFSDREMYDEKLDCPCSPKSWNISDDLGQIEYIFSDKTGTLTQNIMSFKKCSINGIRYGKSHNEDTCIKKRRNLNYNENLSCKVDLDKKKMLETLSLSDSPNPESITFISSKFVDHLQSNENYIQTEACFEFFKALALCHSVVTDVQDETLIYNAQSPDEEALVKVARDFGFTLLNTKNRRYTIRIRGENKNFRVLDIIPFTSTRKRMSVIIRDEDGIIHLICKGADTVIFPRLSSGQNNIIEKTKKHLASFSSEGFRTLCIARRTIDKQDYLEWKVNFNEANSAIHERNEKVSKVSEMIEQELELLGGTAIEDKLQENVPETIALLAIAGIKLWVLTGDKVETAINIGYSCNLLDPNMTIFRIDANSFGALEEVEAFIRNTLCFNFGYMGTDEEFRFLLKDHSPPSPKHAIVIDGDALNFVLSEQVSFLFLMLCKQCKTVLCCRVSPSQKAAVVALVKKSLNVVTLAIGDGANDVSMIQEADVGVGIKGVEGQAASMSADYAIGQFSFLGRLLLVHGRWDYKRMSQMISFFFYKNVIWTFILFWYQFYNEFDGNYIFDYTYVMLFNLLFTSLPVIIAGCFDQDVDASVSMKNPSLYQRGILGLEWNGKRFWSYMLDGIYQSLVCFGVALFVFKFGDFVSWTGRNIECIEDIGLFISSPTIFVINIFILMNQERLNLISLITWMFSIGVFWIWTFIYSEVGPSYAFHKSASRTCQTFGFWCVTVLTIALCLLPRFSYICLQKLFYPRDIDLLRRRLCAKSDDETSSSSSFATDIEMCEQCNDPLSSKKNSGIVTSVSFDDSNK.

Residues 1–154 (MPSLINFDAI…PKNLWNQFKN (154 aa)) are Cytoplasmic-facing. The interval 34–104 (HNGSLAHEGP…KKNEAGTESG (71 aa)) is disordered. Residues 50–70 (SSRHHESQFSQEAHAEQRSRD) are compositionally biased toward basic and acidic residues. Residues 77–92 (FEGSCNNSDQSWTSRV) are compositionally biased toward polar residues. The chain crosses the membrane as a helical span at residues 155-172 (IANAFFLFVTLLQCIPLF). Over 173-177 (CPEHL) the chain is Lumenal. Residues 178-197 (GLSFIPLSVILLTTAIKDGI) form a helical membrane-spanning segment. Over 198–482 (EDYRRCVLDK…PSKRSRITRD (285 aa)) the chain is Cytoplasmic. A helical membrane pass occupies residues 483–503 (LNWTIILNFLLLFAMCLFSGV). At 504–531 (LRSIYSAQNNSARVFELSKNSNTAPAHG) the chain is on the lumenal side. A helical membrane pass occupies residues 532–552 (IISIFTSLILFQNLVPISLYI). Over 553-1091 (TMDIVRSIQS…GRWDYKRMSQ (539 aa)) the chain is Cytoplasmic. Residue D600 is the 4-aspartylphosphate intermediate of the active site. Positions 600, 601, 602, 724, 765, 767, 770, 788, 822, 823, 902, 903, 904, 1009, and 1015 each coordinate ATP. D600 contributes to the Mg(2+) binding site. T602 is a binding site for Mg(2+). D1035 is a Mg(2+) binding site. 2 residues coordinate ATP: N1038 and D1039. Residue D1039 coordinates Mg(2+). Residues 1092–1112 (MISFFFYKNVIWTFILFWYQF) form a helical membrane-spanning segment. Residues 1113–1124 (YNEFDGNYIFDY) are Lumenal-facing. Residues 1125–1145 (TYVMLFNLLFTSLPVIIAGCF) form a helical membrane-spanning segment. At 1146–1174 (DQDVDASVSMKNPSLYQRGILGLEWNGKR) the chain is on the cytoplasmic side. A helical transmembrane segment spans residues 1175 to 1197 (FWSYMLDGIYQSLVCFGVALFVF). At 1198–1212 (KFGDFVSWTGRNIEC) the chain is on the lumenal side. Residues 1213–1233 (IEDIGLFISSPTIFVINIFIL) form a helical membrane-spanning segment. The Cytoplasmic segment spans residues 1234–1240 (MNQERLN). A helical membrane pass occupies residues 1241–1261 (LISLITWMFSIGVFWIWTFIY). The Lumenal segment spans residues 1262–1276 (SEVGPSYAFHKSASR). The helical transmembrane segment at 1277-1297 (TCQTFGFWCVTVLTIALCLLP) threads the bilayer. Residue R1298 coordinates a 1,2-diacyl-sn-glycero-3-phospho-L-serine. The Cytoplasmic portion of the chain corresponds to 1298 to 1367 (RFSYICLQKL…TSVSFDDSNK (70 aa)).

It belongs to the cation transport ATPase (P-type) (TC 3.A.3) family. Type IV subfamily. Requires Mg(2+) as cofactor.

The protein localises to the cell membrane. It localises to the endoplasmic reticulum membrane. It carries out the reaction ATP + H2O + phospholipidSide 1 = ADP + phosphate + phospholipidSide 2.. The catalysed reaction is a 1,2-diacyl-sn-glycero-3-phosphoethanolamine(out) + ATP + H2O = a 1,2-diacyl-sn-glycero-3-phosphoethanolamine(in) + ADP + phosphate + H(+). It catalyses the reaction a 1,2-diacyl-sn-glycero-3-phosphocholine(out) + ATP + H2O = a 1,2-diacyl-sn-glycero-3-phosphocholine(in) + ADP + phosphate + H(+). The enzyme catalyses a beta-D-glucosyl-(1&lt;-&gt;1')-N-acylsphing-4-enine(out) + ATP + H2O = a beta-D-glucosyl-(1&lt;-&gt;1')-N-acylsphing-4-enine(in) + ADP + phosphate + H(+). It carries out the reaction a 1,2-diacyl-sn-glycero-3-phospho-L-serine(out) + ATP + H2O = a 1,2-diacyl-sn-glycero-3-phospho-L-serine(in) + ADP + phosphate + H(+). In terms of biological role, catalytic component of a P4-ATPase flippase complex which catalyzes the hydrolysis of ATP coupled to the transport of glucosylceramide, phosphatidylcholine, phosphatidylethanolamine, and small amounts of phosphatidylserine from the lumenal to the cytosolic leaflet of the cell membrane and ensures the maintenance of asymmetric distribution of phospholipids. The sequence is that of Phospholipid-transporting ATPase C4F10.16c from Schizosaccharomyces pombe (strain 972 / ATCC 24843) (Fission yeast).